Consider the following 262-residue polypeptide: MRRTLYRLMIELTNGRFTSYILRKFAQSRLSSIIIPSYAKVFQINQDEMEKGLKEYRTLHELFTRKLKEGKRSIDTDASSIVSPVDGVFADHGPIEDTKTFDIKGKRYSIVDMLGNEERAQRYAGGTYMVIYLSPSHYHRIHSPLSGSVTERFVLGRKSYPVNAAGMEYGKEPLSKNYRSVTEVNSDGEHMALVKVGAMFVNSIELLHERDTVQKGEEMAYFTFGSTVVLLFEKDMIEVVKELKSGQELRLGEKIATRLAHK.

Residues aspartate 86, histidine 142, and serine 226 each act as charge relay system; for autoendoproteolytic cleavage activity in the active site. Catalysis depends on serine 226, which acts as the Schiff-base intermediate with substrate; via pyruvic acid; for decarboxylase activity. Pyruvic acid (Ser); by autocatalysis is present on serine 226.

The protein belongs to the phosphatidylserine decarboxylase family. PSD-B subfamily. Prokaryotic type I sub-subfamily. As to quaternary structure, heterodimer of a large membrane-associated beta subunit and a small pyruvoyl-containing alpha subunit. It depends on pyruvate as a cofactor. Post-translationally, is synthesized initially as an inactive proenzyme. Formation of the active enzyme involves a self-maturation process in which the active site pyruvoyl group is generated from an internal serine residue via an autocatalytic post-translational modification. Two non-identical subunits are generated from the proenzyme in this reaction, and the pyruvate is formed at the N-terminus of the alpha chain, which is derived from the carboxyl end of the proenzyme. The autoendoproteolytic cleavage occurs by a canonical serine protease mechanism, in which the side chain hydroxyl group of the serine supplies its oxygen atom to form the C-terminus of the beta chain, while the remainder of the serine residue undergoes an oxidative deamination to produce ammonia and the pyruvoyl prosthetic group on the alpha chain. During this reaction, the Ser that is part of the protease active site of the proenzyme becomes the pyruvoyl prosthetic group, which constitutes an essential element of the active site of the mature decarboxylase.

The protein resides in the cell membrane. It carries out the reaction a 1,2-diacyl-sn-glycero-3-phospho-L-serine + H(+) = a 1,2-diacyl-sn-glycero-3-phosphoethanolamine + CO2. It functions in the pathway phospholipid metabolism; phosphatidylethanolamine biosynthesis; phosphatidylethanolamine from CDP-diacylglycerol: step 2/2. Functionally, catalyzes the formation of phosphatidylethanolamine (PtdEtn) from phosphatidylserine (PtdSer). The chain is Phosphatidylserine decarboxylase proenzyme from Bacillus cereus (strain ZK / E33L).